Reading from the N-terminus, the 471-residue chain is 5-hydroxytryptamine receptor 2A (471 aa).

Residues 1-80 lie on the Extracellular side of the membrane; sequence MEILCEDNTS…LQEKNWSALL (80 aa). Residues asparagine 8, asparagine 38, asparagine 44, asparagine 51, and asparagine 54 are each glycosylated (N-linked (GlcNAc...) asparagine). Residues 81–97 form a helical membrane-spanning segment; it reads TAVVIILTIAGNILVIM. Topologically, residues 98 to 111 are cytoplasmic; it reads AVSLEKKLQNATNY. The helical transmembrane segment at 112-137 threads the bilayer; it reads FLMSLAIADMLLGFLVMPVSMLTILY. At 138 to 146 the chain is on the extracellular side; sequence GYRWPLPSK. Residues 147-171 traverse the membrane as a helical segment; sequence LCAVWIYLDVLFSTASIMHLCAISL. Cysteine 148 and cysteine 227 are disulfide-bonded. Aspartate 155 lines the serotonin pocket. The DRY motif; important for ligand-induced conformation changes signature appears at 172-174; the sequence is DRY. Topologically, residues 172–191 are cytoplasmic; sequence DRYVAIQNPIHHSRFNSRTK. A helical transmembrane segment spans residues 192–215; sequence AFLKIIAVWTISVGVSMPIPVFGL. Over 216-232 the chain is Extracellular; sequence QDDSKVFKQGSCLLADD. Residues 233-258 traverse the membrane as a helical segment; it reads NFVLIGSFVAFFIPLTIMVITYFLTI. The Cytoplasmic portion of the chain corresponds to 259–322; it reads KSLQKEATLC…QSISNEQKAC (64 aa). Serine 280 carries the post-translational modification Phosphoserine. The helical transmembrane segment at 323–348 threads the bilayer; that stretch reads KVLGIVFFLFVVMWCPFFITNIMAVI. Asparagine 343 contacts serotonin. Cysteine 349 and cysteine 353 are oxidised to a cystine. The Extracellular portion of the chain corresponds to 349-356; sequence CKESCNEH. Residues 357–382 traverse the membrane as a helical segment; it reads VIGALLNVFVWIGYLSSAVNPLVYTL. The NPxxY motif; important for ligand-induced conformation changes and signaling motif lies at 376–380; it reads NPLVY. Residues 383–471 are Cytoplasmic-facing; it reads FNKTYRSAFS…NTVNEKVSCV (89 aa). Residues 469–471 carry the PDZ-binding motif; that stretch reads SCV.

This sequence belongs to the G-protein coupled receptor 1 family. Interacts (via C-terminus) with MPDZ and PATJ. May interact (via C-terminus) with MPP3, PRDX6, DLG4, DLG1, CASK, APBA1 and MAGI2. Interacts with GRM2 and DRD2; this may affect signaling.

It is found in the cell membrane. The protein resides in the cell projection. It localises to the dendrite. The protein localises to the axon. Its subcellular location is the cytoplasmic vesicle. It is found in the membrane. The protein resides in the caveola. It localises to the presynapse. Its activity is regulated as follows. G-protein coupled receptor activity is regulated by lipids: oleamide increases HTR2A-mediated activity. Functionally, G-protein coupled receptor for 5-hydroxytryptamine (serotonin). Also functions as a receptor for various drugs and psychoactive substances, including mescaline, psilocybin, 1-(2,5-dimethoxy-4-iodophenyl)-2-aminopropane (DOI) and lysergic acid diethylamide (LSD). Ligand binding causes a conformation change that triggers signaling via guanine nucleotide-binding proteins (G proteins) and modulates the activity of downstream effectors. HTR2A is coupled to G(q)/G(11) G alpha proteins and activates phospholipase C-beta, releasing diacylglycerol (DAG) and inositol 1,4,5-trisphosphate (IP3) second messengers that modulate the activity of phosphatidylinositol 3-kinase and promote the release of Ca(2+) ions from intracellular stores, respectively. Beta-arrestin family members inhibit signaling via G proteins and mediate activation of alternative signaling pathways. Affects neural activity, perception, cognition and mood. Plays a role in the regulation of behavior, including responses to anxiogenic situations and psychoactive substances. Plays a role in intestinal smooth muscle contraction, and may play a role in arterial vasoconstriction. This chain is 5-hydroxytryptamine receptor 2A (HTR2A), found in Cricetulus griseus (Chinese hamster).